Reading from the N-terminus, the 443-residue chain is Ribitol-5-phosphate xylosyltransferase 1 (443 aa).

The Cytoplasmic segment spans residues 1–9; sequence MRLTRKRLC. A helical; Signal-anchor for type II membrane protein transmembrane segment spans residues 10–30; sequence SFLIALYCLFSLYAAYHVFFG. Residues 31–443 lie on the Extracellular side of the membrane; it reads RRRQAPAGSP…ESSFLMNNKS (413 aa). The disordered stretch occupies residues 35–76; that stretch reads APAGSPRGLRKGAAPARERRGREQSTLESEEWNPWEGDEKNE. The segment covering 50–59 has biased composition (basic and acidic residues); the sequence is ARERRGREQS.

It belongs to the RXYLT1 family. In terms of assembly, forms a complex composed of FKTN/fukutin, FKRP and RXYLT1/TMEM5.

The protein localises to the golgi apparatus membrane. The catalysed reaction is 3-O-[Rib-ol-P-Rib-ol-P-3-beta-D-GalNAc-(1-&gt;3)-beta-D-GlcNAc-(1-&gt;4)-(O-6-P-alpha-D-Man)]-Thr-[protein] + UDP-alpha-D-xylose = 3-O-[beta-D-Xyl-(1-&gt;4)-Rib-ol-P-Rib-ol-P-3-beta-D-GalNAc-(1-&gt;3)-beta-D-GlcNAc-(1-&gt;4)-(O-6-P-alpha-D-Man)]-Thr-[protein] + UDP + H(+). Its pathway is protein modification; protein glycosylation. Functionally, acts as a UDP-D-xylose:ribitol-5-phosphate beta1,4-xylosyltransferase, which catalyzes the transfer of UDP-D-xylose to ribitol 5-phosphate (Rbo5P) to form the Xylbeta1-4Rbo5P linkage on O-mannosyl glycan. Participates in the biosynthesis of the phosphorylated O-mannosyl trisaccharide (N-acetylgalactosamine-beta-3-N-acetylglucosamine-beta-4-(phosphate-6-)mannose), a carbohydrate structure present in alpha-dystroglycan (DAG1), which is required for binding laminin G-like domain-containing extracellular proteins with high affinity. In Homo sapiens (Human), this protein is Ribitol-5-phosphate xylosyltransferase 1.